The following is a 405-amino-acid chain: Aspartokinase (405 aa).

7–10 (KYGG) contributes to the ATP binding site. Residue 25–30 (RIAHYR) participates in substrate binding. ATP is bound at residue S41. Residues 47-49 (TDE), E74, 125-126 (LE), 150-153 (RGGS), and S153 contribute to the substrate site. ATP-binding positions include 173–174 (TD), 179–184 (YTTDPH), and R209. 2 ACT domains span residues 263 to 342 (IGLI…IAKV) and 344 to 405 (IVGV…LDKA). Substrate contacts are provided by residues D270, 288–290 (AVD), Q294, 355–356 (VP), 369–370 (NI), and 376–377 (SE).

The protein belongs to the aspartokinase family. In terms of assembly, tetramer consisting of 2 isoforms Alpha (catalytic and regulation) and of a homodimer of 2 isoforms Beta (regulation).

It catalyses the reaction L-aspartate + ATP = 4-phospho-L-aspartate + ADP. The protein operates within amino-acid biosynthesis; L-lysine biosynthesis via DAP pathway; (S)-tetrahydrodipicolinate from L-aspartate: step 1/4. It participates in amino-acid biosynthesis; L-methionine biosynthesis via de novo pathway; L-homoserine from L-aspartate: step 1/3. Its pathway is amino-acid biosynthesis; L-threonine biosynthesis; L-threonine from L-aspartate: step 1/5. Its function is as follows. Catalyzes the phosphorylation of the beta-carboxyl group of aspartic acid with ATP to yield 4-phospho-L-aspartate, which is involved in the branched biosynthetic pathway leading to the biosynthesis of amino acids lysine, threonine, isoleucine and methionine. The chain is Aspartokinase (ask) from Thermus thermophilus (strain ATCC BAA-163 / DSM 7039 / HB27).